The chain runs to 699 residues: Ribosomal RNA large subunit methyltransferase K/L (699 aa).

The THUMP domain occupies 44–155 (DAYKLCLWSR…RDNVILGIDL (112 aa)).

The protein belongs to the methyltransferase superfamily. RlmKL family.

The protein resides in the cytoplasm. It catalyses the reaction guanosine(2445) in 23S rRNA + S-adenosyl-L-methionine = N(2)-methylguanosine(2445) in 23S rRNA + S-adenosyl-L-homocysteine + H(+). It carries out the reaction guanosine(2069) in 23S rRNA + S-adenosyl-L-methionine = N(2)-methylguanosine(2069) in 23S rRNA + S-adenosyl-L-homocysteine + H(+). In terms of biological role, specifically methylates the guanine in position 2445 (m2G2445) and the guanine in position 2069 (m7G2069) of 23S rRNA. This Alteromonas mediterranea (strain DSM 17117 / CIP 110805 / LMG 28347 / Deep ecotype) protein is Ribosomal RNA large subunit methyltransferase K/L.